A 223-amino-acid polypeptide reads, in one-letter code: MIPQTLEQLLSQAQSIAGLTFGELADELHIPVPIDLKRDKGWVGMLLERALGATAGSKAEQDFSHLGVELKTLPINAEGYPLETTFVSLAPLVQNSGIKWENSHVRHKLSCVLWIPIEGSRHIPLRERHIGAPIFWKPTAEQERQLKQDWEELMDLIVLGKLEQITARIGEVMQLRPKGANSRAVTKGIGKNGEIIDTLPLGFYLRKEFTAQILKAFLDVKPL.

The protein belongs to the MutH family.

The protein resides in the cytoplasm. Its function is as follows. Sequence-specific endonuclease that cleaves unmethylated GATC sequences. It is involved in DNA mismatch repair. In Haemophilus influenzae (strain 86-028NP), this protein is DNA mismatch repair protein MutH.